Here is a 160-residue protein sequence, read N- to C-terminus: Crossover junction endodeoxyribonuclease RuvC (160 aa).

Active-site residues include Asp-7, Glu-70, and Asp-142. The Mg(2+) site is built by Asp-7, Glu-70, and Asp-142.

This sequence belongs to the RuvC family. As to quaternary structure, homodimer which binds Holliday junction (HJ) DNA. The HJ becomes 2-fold symmetrical on binding to RuvC with unstacked arms; it has a different conformation from HJ DNA in complex with RuvA. In the full resolvosome a probable DNA-RuvA(4)-RuvB(12)-RuvC(2) complex forms which resolves the HJ. It depends on Mg(2+) as a cofactor.

Its subcellular location is the cytoplasm. The enzyme catalyses Endonucleolytic cleavage at a junction such as a reciprocal single-stranded crossover between two homologous DNA duplexes (Holliday junction).. In terms of biological role, the RuvA-RuvB-RuvC complex processes Holliday junction (HJ) DNA during genetic recombination and DNA repair. Endonuclease that resolves HJ intermediates. Cleaves cruciform DNA by making single-stranded nicks across the HJ at symmetrical positions within the homologous arms, yielding a 5'-phosphate and a 3'-hydroxyl group; requires a central core of homology in the junction. The consensus cleavage sequence is 5'-(A/T)TT(C/G)-3'. Cleavage occurs on the 3'-side of the TT dinucleotide at the point of strand exchange. HJ branch migration catalyzed by RuvA-RuvB allows RuvC to scan DNA until it finds its consensus sequence, where it cleaves and resolves the cruciform DNA. The sequence is that of Crossover junction endodeoxyribonuclease RuvC from Ehrlichia ruminantium (strain Gardel).